The primary structure comprises 209 residues: Nucleoside triphosphate pyrophosphatase (209 aa).

The Proton acceptor role is filled by aspartate 74.

Belongs to the Maf family. The cofactor is a divalent metal cation.

The protein resides in the cytoplasm. It catalyses the reaction a ribonucleoside 5'-triphosphate + H2O = a ribonucleoside 5'-phosphate + diphosphate + H(+). The enzyme catalyses a 2'-deoxyribonucleoside 5'-triphosphate + H2O = a 2'-deoxyribonucleoside 5'-phosphate + diphosphate + H(+). In terms of biological role, nucleoside triphosphate pyrophosphatase. May have a dual role in cell division arrest and in preventing the incorporation of modified nucleotides into cellular nucleic acids. The chain is Nucleoside triphosphate pyrophosphatase from Neorickettsia sennetsu (strain ATCC VR-367 / Miyayama) (Ehrlichia sennetsu).